The chain runs to 426 residues: Tryptophan synthase beta chain (426 aa).

Residue lysine 108 is modified to N6-(pyridoxal phosphate)lysine.

It belongs to the TrpB family. In terms of assembly, tetramer of two alpha and two beta chains. Pyridoxal 5'-phosphate is required as a cofactor.

It catalyses the reaction (1S,2R)-1-C-(indol-3-yl)glycerol 3-phosphate + L-serine = D-glyceraldehyde 3-phosphate + L-tryptophan + H2O. It participates in amino-acid biosynthesis; L-tryptophan biosynthesis; L-tryptophan from chorismate: step 5/5. The beta subunit is responsible for the synthesis of L-tryptophan from indole and L-serine. The chain is Tryptophan synthase beta chain (trpB) from Thermoplasma volcanium (strain ATCC 51530 / DSM 4299 / JCM 9571 / NBRC 15438 / GSS1).